A 309-amino-acid polypeptide reads, in one-letter code: tRNA hydroxylation protein P2 (309 aa).

This sequence belongs to the peptidase U32 family.

Its function is as follows. Involved in prephenate-dependent formation of 5-hydroxyuridine (ho5U) modification at position 34 in tRNAs, the first step in 5-methoxyuridine (mo5U) biosynthesis. The polypeptide is tRNA hydroxylation protein P2 (Bacillus subtilis (strain 168)).